We begin with the raw amino-acid sequence, 160 residues long: Transcriptional repressor NrdR (160 aa).

The segment at 3-34 (CPACNYNGTKVLDSRPVQDFGSIRRRRECESC) is a zinc-finger region. An ATP-cone domain is found at 49–139 (LIIVKKDGTR…VYKQFKDINV (91 aa)).

Belongs to the NrdR family. Zn(2+) is required as a cofactor.

In terms of biological role, negatively regulates transcription of bacterial ribonucleotide reductase nrd genes and operons by binding to NrdR-boxes. This Exiguobacterium sibiricum (strain DSM 17290 / CCUG 55495 / CIP 109462 / JCM 13490 / 255-15) protein is Transcriptional repressor NrdR.